The following is a 132-amino-acid chain: Small ribosomal subunit protein uS8 (132 aa).

It belongs to the universal ribosomal protein uS8 family. Part of the 30S ribosomal subunit. Contacts proteins S5 and S12.

Its function is as follows. One of the primary rRNA binding proteins, it binds directly to 16S rRNA central domain where it helps coordinate assembly of the platform of the 30S subunit. This chain is Small ribosomal subunit protein uS8, found in Borreliella afzelii (strain PKo) (Borrelia afzelii).